We begin with the raw amino-acid sequence, 414 residues long: Probable cytochrome P450 127A1 (414 aa).

Cys364 lines the heme pocket.

It belongs to the cytochrome P450 family. The cofactor is heme.

In terms of biological role, cytochromes P450 are a group of heme-thiolate monooxygenases. They oxidize a variety of structurally unrelated compounds, including steroids, fatty acids, and xenobiotics. The sequence is that of Probable cytochrome P450 127A1 (cyp127A1) from Sinorhizobium fredii (strain NBRC 101917 / NGR234).